A 1379-amino-acid polypeptide reads, in one-letter code: DNA-directed RNA polymerase subunit beta'' (1379 aa).

Zn(2+)-binding residues include Cys-220, Cys-291, Cys-298, and Cys-301.

This sequence belongs to the RNA polymerase beta' chain family. RpoC2 subfamily. In terms of assembly, in plastids the minimal PEP RNA polymerase catalytic core is composed of four subunits: alpha, beta, beta', and beta''. When a (nuclear-encoded) sigma factor is associated with the core the holoenzyme is formed, which can initiate transcription. Zn(2+) serves as cofactor.

Its subcellular location is the plastid. It catalyses the reaction RNA(n) + a ribonucleoside 5'-triphosphate = RNA(n+1) + diphosphate. DNA-dependent RNA polymerase catalyzes the transcription of DNA into RNA using the four ribonucleoside triphosphates as substrates. The sequence is that of DNA-directed RNA polymerase subunit beta'' from Cuscuta reflexa (Southern Asian dodder).